The chain runs to 449 residues: Glucose-6-phosphate isomerase (449 aa).

Glu-291 serves as the catalytic Proton donor. Active-site residues include His-312 and Lys-426.

Belongs to the GPI family.

It is found in the cytoplasm. The catalysed reaction is alpha-D-glucose 6-phosphate = beta-D-fructose 6-phosphate. Its pathway is carbohydrate biosynthesis; gluconeogenesis. The protein operates within carbohydrate degradation; glycolysis; D-glyceraldehyde 3-phosphate and glycerone phosphate from D-glucose: step 2/4. In terms of biological role, catalyzes the reversible isomerization of glucose-6-phosphate to fructose-6-phosphate. The protein is Glucose-6-phosphate isomerase of Streptococcus pneumoniae (strain ATCC BAA-255 / R6).